A 426-amino-acid chain; its full sequence is Probable inactive metalloprotease YmfF (426 aa).

H50 and E138 together coordinate Zn(2+).

The protein belongs to the peptidase M16 family.

This is Probable inactive metalloprotease YmfF (ymfF) from Bacillus subtilis (strain 168).